The chain runs to 66 residues: Alpha-like toxin BeM9 (66 aa).

Residues Arg2–His66 enclose the LCN-type CS-alpha/beta domain. 4 disulfide bridges follow: Cys12-Cys65, Cys16-Cys38, Cys24-Cys48, and Cys28-Cys50.

Belongs to the long (4 C-C) scorpion toxin superfamily. Sodium channel inhibitor family. Alpha subfamily. Expressed by the venom gland.

Its subcellular location is the secreted. Functionally, alpha toxins bind voltage-independently at site-3 of sodium channels (Nav) and inhibit the inactivation of the activated channels, thereby blocking neuronal transmission. This toxin is active on both mammals and insects, since it inhibits inactivation of rNav1.4/SCN4A, hNav1.5/SCN5A, mNav1.6/SCN8A and insect BgNav1 and DmNav1 channels. In vivo, it shows paralytic activity in mice. The polypeptide is Alpha-like toxin BeM9 (Mesobuthus eupeus (Lesser Asian scorpion)).